The chain runs to 314 residues: BCL2/adenovirus E1B 19 kDa protein-interacting protein 2 (314 aa).

Residues 1–21 (MEGVELKEEWQDEDFPIPLPE) form a disordered region. Positions 10–21 (WQDEDFPIPLPE) are enriched in acidic residues. Residues Ser-41 and Ser-77 each carry the phosphoserine modification. Positions 76–100 (ESGEIDLDGLDTPSENSNEFEWEDD) are disordered. Thr-87 bears the Phosphothreonine mark. Residues Ser-89, Ser-92, and Ser-114 each carry the phosphoserine modification. Positions 147 to 304 (IEPYKKVISH…CIKQVDQELN (158 aa)) constitute a CRAL-TRIO domain.

Its subcellular location is the cytoplasm. The protein resides in the perinuclear region. Functionally, implicated in the suppression of cell death. Interacts with the BCL-2 and adenovirus E1B 19 kDa proteins. The chain is BCL2/adenovirus E1B 19 kDa protein-interacting protein 2 (BNIP2) from Homo sapiens (Human).